Consider the following 432-residue polypeptide: MDARWWAVVVLAAFPSLGAGGETPEAPPESWTQLWFFRFVVNAAGYASFMVPGYLLVQYFRRKNYLETGRGLCFPLVKACVFGNEPKASDEVPLAPRTEAAETTPMWQALKLLFCATGLQVSYLTWGVLQERVMTRSYGATATSPGERFTDSQFLVLMNRVLALIVAGLSCVLCKQPRHGAPMYRYSFASLSNVLSSWCQYEALKFVSFPTQVLAKVSKVIPVMLMGKLVSRRSYEHWEYLTATLISIGVSMFLLSSGPEPRSSPATTLSGLILLAGYIAFDSFTSNWQDALFAYKMSSVQMMFGVNFFSCLFTVGSLLEQGALLEGTRFMGRHSEFAAHALLLSICSACGQLFIFYTIGQFGAAVFTIIMTLRQAFAILLSCLLYGHTVTVVGGLGVAVVFAALLLRVYARGRLKQRGKKAVPVESPVQKV.

The next 9 helical transmembrane spans lie at 5–25, 40–60, 109–129, 154–174, 238–258, 265–285, 299–319, 353–373, and 387–407; these read WWAVVVLAAFPSLGAGGETPE, VVNAAGYASFMVPGYLLVQYF, ALKLLFCATGLQVSYLTWGVL, FLVLMNRVLALIVAGLSCVLC, WEYLTATLISIGVSMFLLSSG, PATTLSGLILLAGYIAFDSFT, SVQMMFGVNFFSCLFTVGSLL, LFIFYTIGQFGAAVFTIIMTL, and GHTVTVVGGLGVAVVFAALLL. Position 427 is a phosphoserine (Ser-427).

Belongs to the nucleotide-sugar transporter family. SLC35B subfamily.

It is found in the golgi apparatus membrane. It carries out the reaction 3'-phosphoadenylyl sulfate(in) + adenosine 3',5'-bisphosphate(out) = 3'-phosphoadenylyl sulfate(out) + adenosine 3',5'-bisphosphate(in). In terms of biological role, probably functions as a 3'-phosphoadenylyl sulfate:adenosine 3',5'-bisphosphate antiporter at the Golgi membranes. Mediates the transport from the cytosol into the lumen of the Golgi of 3'-phosphoadenylyl sulfate/adenosine 3'-phospho 5'-phosphosulfate (PAPS), a universal sulfuryl donor for sulfation events that take place in that compartment. The sequence is that of Adenosine 3'-phospho 5'-phosphosulfate transporter 1 from Pongo abelii (Sumatran orangutan).